The chain runs to 499 residues: Alpha-L-arabinofuranosidase B (499 aa).

The N-terminal stretch at 1–18 (MFSRRNLVALGLAATVSA) is a signal peptide. N-linked (GlcNAc...) asparagine glycosylation is found at Asn83 and Asn202.

This sequence belongs to the glycosyl hydrolase 54 family.

The enzyme catalyses Hydrolysis of terminal non-reducing alpha-L-arabinofuranoside residues in alpha-L-arabinosides.. It participates in glycan metabolism; L-arabinan degradation. In terms of biological role, able to hydrolyze 1,5-, 1,3- and 1,2-alpha-linkages not only in L-arabinofuranosyl oligosaccharides, but also in polysac-charides containing terminal non-reducing L-arabinofuranoses in side chains, like L-arabinan, arabinogalactan and arabinoxylan. This chain is Alpha-L-arabinofuranosidase B (abfB), found in Aspergillus niger.